A 718-amino-acid chain; its full sequence is Polyphosphate kinase (718 aa).

An ATP-binding site is contributed by N47. 2 residues coordinate Mg(2+): R372 and R402. H432 (phosphohistidine intermediate) is an active-site residue. Residues Y465, R561, and H589 each coordinate ATP. A disordered region spans residues 683–718 (KADHGDTTPTSNAHQFIPMMSPKNEPDASDLDREDD). Acidic residues predominate over residues 709 to 718 (DASDLDREDD).

It belongs to the polyphosphate kinase 1 (PPK1) family. Requires Mg(2+) as cofactor. Post-translationally, an intermediate of this reaction is the autophosphorylated ppk in which a phosphate is covalently linked to a histidine residue through a N-P bond.

The catalysed reaction is [phosphate](n) + ATP = [phosphate](n+1) + ADP. Functionally, catalyzes the reversible transfer of the terminal phosphate of ATP to form a long-chain polyphosphate (polyP). This Lactiplantibacillus plantarum (strain ATCC BAA-793 / NCIMB 8826 / WCFS1) (Lactobacillus plantarum) protein is Polyphosphate kinase.